Consider the following 417-residue polypeptide: Serine hydroxymethyltransferase (417 aa).

Residues leucine 112 and 116–118 each bind (6S)-5,6,7,8-tetrahydrofolate; that span reads GHL. Lysine 221 is subject to N6-(pyridoxal phosphate)lysine. Glutamate 247 serves as a coordination point for (6S)-5,6,7,8-tetrahydrofolate.

This sequence belongs to the SHMT family. As to quaternary structure, homodimer. The cofactor is pyridoxal 5'-phosphate.

The protein localises to the cytoplasm. The enzyme catalyses (6R)-5,10-methylene-5,6,7,8-tetrahydrofolate + glycine + H2O = (6S)-5,6,7,8-tetrahydrofolate + L-serine. The protein operates within one-carbon metabolism; tetrahydrofolate interconversion. Its pathway is amino-acid biosynthesis; glycine biosynthesis; glycine from L-serine: step 1/1. Its function is as follows. Catalyzes the reversible interconversion of serine and glycine with tetrahydrofolate (THF) serving as the one-carbon carrier. This reaction serves as the major source of one-carbon groups required for the biosynthesis of purines, thymidylate, methionine, and other important biomolecules. Also exhibits THF-independent aldolase activity toward beta-hydroxyamino acids, producing glycine and aldehydes, via a retro-aldol mechanism. In Borrelia recurrentis (strain A1), this protein is Serine hydroxymethyltransferase.